A 217-amino-acid chain; its full sequence is Probable GTP-binding protein EngB (217 aa).

One can recognise an EngB-type G domain in the interval 24–207; sequence SQPEICFAGR…HALIESWLIP (184 aa). Residues 32–39, 59–63, 81–84, 148–151, and 185–188 contribute to the GTP site; these read GRSNAGKS, GRTQH, DLPG, TKCD, and LFSA. Residues S39 and T61 each coordinate Mg(2+).

The protein belongs to the TRAFAC class TrmE-Era-EngA-EngB-Septin-like GTPase superfamily. EngB GTPase family. The cofactor is Mg(2+).

In terms of biological role, necessary for normal cell division and for the maintenance of normal septation. The protein is Probable GTP-binding protein EngB of Paraburkholderia xenovorans (strain LB400).